A 591-amino-acid chain; its full sequence is L-fucose isomerase (591 aa).

Residues E337 and D361 each act as proton acceptor in the active site. Mn(2+) is bound by residues E337, D361, and H528.

The protein belongs to the L-fucose isomerase family. In terms of assembly, homohexamer. It depends on Mn(2+) as a cofactor.

It localises to the cytoplasm. It catalyses the reaction L-fucose = L-fuculose. The protein operates within carbohydrate degradation; L-fucose degradation; L-lactaldehyde and glycerone phosphate from L-fucose: step 1/3. Functionally, converts the aldose L-fucose into the corresponding ketose L-fuculose. The protein is L-fucose isomerase of Escherichia coli (strain ATCC 8739 / DSM 1576 / NBRC 3972 / NCIMB 8545 / WDCM 00012 / Crooks).